The chain runs to 880 residues: Protein translocase subunit SecA (880 aa).

Residues Q87, 105 to 109 (GEGKT), and D501 contribute to the ATP site. Positions 864, 866, 875, and 876 each coordinate Zn(2+).

It belongs to the SecA family. As to quaternary structure, monomer and homodimer. Part of the essential Sec protein translocation apparatus which comprises SecA, SecYEG and auxiliary proteins SecDF-YajC and YidC. The cofactor is Zn(2+).

It localises to the cell inner membrane. The protein resides in the cytoplasm. The catalysed reaction is ATP + H2O + cellular proteinSide 1 = ADP + phosphate + cellular proteinSide 2.. Its function is as follows. Part of the Sec protein translocase complex. Interacts with the SecYEG preprotein conducting channel. Has a central role in coupling the hydrolysis of ATP to the transfer of proteins into and across the cell membrane, serving both as a receptor for the preprotein-SecB complex and as an ATP-driven molecular motor driving the stepwise translocation of polypeptide chains across the membrane. The protein is Protein translocase subunit SecA of Orientia tsutsugamushi (strain Boryong) (Rickettsia tsutsugamushi).